A 118-amino-acid chain; its full sequence is Large ribosomal subunit protein uL24 (118 aa).

This sequence belongs to the universal ribosomal protein uL24 family. In terms of assembly, part of the 50S ribosomal subunit.

In terms of biological role, one of two assembly initiator proteins, it binds directly to the 5'-end of the 23S rRNA, where it nucleates assembly of the 50S subunit. One of the proteins that surrounds the polypeptide exit tunnel on the outside of the subunit. The sequence is that of Large ribosomal subunit protein uL24 from Prochlorococcus marinus (strain SARG / CCMP1375 / SS120).